We begin with the raw amino-acid sequence, 696 residues long: MTIHSPWETSHSKKGLIDIGTHRLFARVSGPRRKPGDPVILIECGGGSISLLWTGVMRALSPTYRIFTYSRAGLEGSDLPPNRGPRTAVEMADDFEKLLDVAGIKSPYIIVGHSYAGVQIRTWMHVHDRMEDIVGAVFVDTATEYTYPRMPIREPQFWFLMEQIPNPAHVLGYDRVHKFFNKEQWEEVLSTDLGHEEKDVDASAAQLKTWKQFERQIMEDKPVSVIKGYFAEDLRRLCVEAERIGAGTPAQRQYVMENLDSLDRVFEETETEQLRLSSCARMVHAAPGSGHTIVFSDPEIVMNEIKWVVEQYEAKRSIATIKGDLSNITAPPFLLASQSTCEFPSYWAEHPSIFVAPALEPDPKKRALLVLRWFLAALKRQQYAGRDEKEGVKKPLNAFLGELFFAQWQDQSGTTKLVSEQVSHHPPITACYLWNDEHGVRADGFACQSITFSGTVNIKQMGHAILHIDKYDEDYLIPLPNVKVQGLLTGTPYPELVGSYQIACSSGFVADIDFSGKKLFGMSGTKNMLHAALYSADDKQRENPIYTIEGAWNDKFTIRDESTGENVETYDTAANPATILEVAPLDLQDPWESRKAWGETISSLNGGKMQGASDAKSKVEQGQRAMRKQDEQNGSKWEPVFFSNEPRDERYIRLTAVAGTSTEEHSQSGFWKFDKDRAERARKPYHGSLRPDNVES.

The segment at 603–642 is disordered; sequence SLNGGKMQGASDAKSKVEQGQRAMRKQDEQNGSKWEPVFF. Over residues 615–633 the composition is skewed to basic and acidic residues; sequence AKSKVEQGQRAMRKQDEQN.

Belongs to the OSBP family.

Its function is as follows. Probable transporter; part of the gene cluster that mediates the biosynthesis of enfumafungin, a glycosylated fernene-type triterpenoid with potent antifungal activity, mediated by its interaction with beta-1,3-glucan synthase and the fungal cell wall. Might be involved in transport of enfumafungin to and across organelle membranes. This is Probable transporter efuK from Hormonema carpetanum.